The primary structure comprises 238 residues: Demethylmenaquinone methyltransferase (238 aa).

S-adenosyl-L-methionine is bound by residues T60, D81, and 108–109 (NA).

This sequence belongs to the class I-like SAM-binding methyltransferase superfamily. MenG/UbiE family.

The enzyme catalyses a 2-demethylmenaquinol + S-adenosyl-L-methionine = a menaquinol + S-adenosyl-L-homocysteine + H(+). Its pathway is quinol/quinone metabolism; menaquinone biosynthesis; menaquinol from 1,4-dihydroxy-2-naphthoate: step 2/2. In terms of biological role, methyltransferase required for the conversion of demethylmenaquinol (DMKH2) to menaquinol (MKH2). The chain is Demethylmenaquinone methyltransferase from Oceanobacillus iheyensis (strain DSM 14371 / CIP 107618 / JCM 11309 / KCTC 3954 / HTE831).